The primary structure comprises 226 residues: Deoxyribose-phosphate aldolase (226 aa).

Asp94 functions as the Proton donor/acceptor in the catalytic mechanism. Lys156 (schiff-base intermediate with acetaldehyde) is an active-site residue. The active-site Proton donor/acceptor is the Lys185.

Belongs to the DeoC/FbaB aldolase family. DeoC type 1 subfamily.

It localises to the cytoplasm. The enzyme catalyses 2-deoxy-D-ribose 5-phosphate = D-glyceraldehyde 3-phosphate + acetaldehyde. It functions in the pathway carbohydrate degradation; 2-deoxy-D-ribose 1-phosphate degradation; D-glyceraldehyde 3-phosphate and acetaldehyde from 2-deoxy-alpha-D-ribose 1-phosphate: step 2/2. In terms of biological role, catalyzes a reversible aldol reaction between acetaldehyde and D-glyceraldehyde 3-phosphate to generate 2-deoxy-D-ribose 5-phosphate. This Burkholderia lata (strain ATCC 17760 / DSM 23089 / LMG 22485 / NCIMB 9086 / R18194 / 383) protein is Deoxyribose-phosphate aldolase.